The sequence spans 363 residues: L-serine dehydratase/L-threonine deaminase (363 aa).

Ala2 is modified (N-acetylalanine). Position 41 is an N6-(pyridoxal phosphate)lysine (Lys41). The disordered stretch occupies residues Arg74–Pro98. Pro164 serves as a coordination point for pyridoxal 5'-phosphate.

Belongs to the serine/threonine dehydratase family. In terms of assembly, homodimer. The cofactor is pyridoxal 5'-phosphate. As to expression, predominantly expressed in the periportal regions of the liver.

Its subcellular location is the cytoplasm. The enzyme catalyses L-serine = pyruvate + NH4(+). It catalyses the reaction L-threonine = 2-oxobutanoate + NH4(+). Its pathway is carbohydrate biosynthesis; gluconeogenesis. Its function is as follows. Catalyzes the pyridoxal-phosphate-dependent dehydrative deamination of L-threonine and L-serine to ammonia and alpha-ketobutyrate and pyruvate, respectively. In Rattus norvegicus (Rat), this protein is L-serine dehydratase/L-threonine deaminase (Sds).